We begin with the raw amino-acid sequence, 270 residues long: Interleukin-33 (270 aa).

Residues 1 to 65 (MKPKMKYSTN…EACYFRRETT (65 aa)) form a homeodomain-like HTH domain region. A propeptide spanning residues 1–94 (MKPKMKYSTN…CQQQSTVESF (94 aa)) is cleaved from the precursor. The interaction with RELA stretch occupies residues 64–111 (TTKRPSLKTDRKHKRHLVLAACQQQSTVESFAFGISGVQKYTRALHDS).

This sequence belongs to the IL-1 family. Highly divergent. In terms of assembly, forms a 1:1:1 heterotrimeric complex with its primary high-affinity receptor IL1RL1 and the coreceptor IL1RAP. Interacts with cargo receptor TMED10; the interaction mediates the translocation from the cytoplasm into the ERGIC (endoplasmic reticulum-Golgi intermediate compartment) and thereby secretion. In terms of processing, the full-length protein can be released from cells and is able to signal via the IL1RL1/ST2 receptor. However, proteolytic processing by CELA1, CSTG/cathepsin G and ELANE/neutrophil elastase produces C-terminal peptides that are more active than the unprocessed full-length protein. May also be proteolytically processed by calpains. Proteolytic cleavage mediated by apoptotic caspases including CASP3 and CASP7 results in IL33 inactivation. In vitro proteolytic cleavage by CASP1 was reported but could not be confirmed in vivo suggesting that IL33 is probably not a direct substrate for that caspase.

It is found in the nucleus. The protein resides in the chromosome. The protein localises to the cytoplasm. Its subcellular location is the cytoplasmic vesicle. It localises to the secretory vesicle. It is found in the secreted. Its function is as follows. Cytokine that binds to and signals through the IL1RL1/ST2 receptor which in turn activates NF-kappa-B and MAPK signaling pathways in target cells. Involved in the maturation of Th2 cells inducing the secretion of T-helper type 2-associated cytokines. Also involved in activation of mast cells, basophils, eosinophils and natural killer cells. Acts as a chemoattractant for Th2 cells, and may function as an 'alarmin', that amplifies immune responses during tissue injury. Induces rapid UCP2-dependent mitochondrial rewiring that attenuates the generation of reactive oxygen species and preserves the integrity of Krebs cycle required for persistent production of itaconate and subsequent GATA3-dependent differentiation of inflammation-resolving alternatively activated macrophages. In quiescent endothelia the uncleaved form is constitutively and abundantly expressed, and acts as a chromatin-associated nuclear factor with transcriptional repressor properties, it may sequester nuclear NF-kappaB/RELA, lowering expression of its targets. This form is rapidely lost upon angiogenic or pro-inflammatory activation. This Pongo abelii (Sumatran orangutan) protein is Interleukin-33 (IL33).